The chain runs to 1125 residues: Probable phospholipid-transporting ATPase IIB (1125 aa).

At 1–131 (MADGIPLNPV…IKNQKYNIVT (131 aa)) the chain is on the cytoplasmic side. A helical membrane pass occupies residues 132 to 152 (FVPGVLYQQFKFFLNLYFLVV). The Extracellular segment spans residues 153–161 (ACSQFVPSL). The helical transmembrane segment at 162–182 (KIGYLYTYWAPLGFVLAVTMV) threads the bilayer. Over 183–369 (REAVDEVRRC…LDLELNRLTK (187 aa)) the chain is Cytoplasmic. The helical transmembrane segment at 370–390 (ALFLAQVVLSVVMVALQGFLG) threads the bilayer. At 391–395 (PWFRN) the chain is on the extracellular side. A helical transmembrane segment spans residues 396–415 (LFRFVVLFSYIIPISLRVNL). At 416 to 928 (DMGKSAYGWM…ALGQFVMHRG (513 aa)) the chain is on the cytoplasmic side. The active-site 4-aspartylphosphate intermediate is aspartate 455. Residues aspartate 455, lysine 456, and threonine 457 each coordinate ATP. Aspartate 455 lines the Mg(2+) pocket. Position 457 (threonine 457) interacts with Mg(2+). The span at 500–511 (QSNGSSASSTPS) shows a compositional bias: low complexity. Disordered regions lie at residues 500–525 (QSNG…RKSV) and 552–574 (GANA…RTYQ). The segment covering 558-567 (ESTEADQDFS) has biased composition (acidic residues). 11 residues coordinate ATP: glutamate 580, phenylalanine 622, lysine 627, lysine 646, arginine 675, threonine 676, threonine 755, glycine 756, aspartate 757, arginine 837, and lysine 843. Aspartate 863 contributes to the Mg(2+) binding site. ATP contacts are provided by asparagine 866 and aspartate 867. Residue aspartate 867 participates in Mg(2+) binding. A helical transmembrane segment spans residues 929-949 (MIISTMQAVFSSIFYFASVPL). Over 950-951 (YQ) the chain is Extracellular. Residues 952–972 (GFLMVGYATIYTMFPVFSLVL) form a helical membrane-spanning segment. At 973–1001 (DQDVKPEMALLYPELYKDLTKGRSLSFKT) the chain is on the cytoplasmic side. Residues 1002–1022 (FLIWVLISIYQGGILMYGALV) traverse the membrane as a helical segment. At 1023–1030 (LFDQEFVH) the chain is on the extracellular side. A helical membrane pass occupies residues 1031 to 1051 (VVAISFTALILTELLMVALTI). Residues 1052 to 1055 (RTWH) are Cytoplasmic-facing. The chain crosses the membrane as a helical span at residues 1056–1076 (WLMVVAQLISLACYLASLAFL). The Extracellular segment spans residues 1077–1088 (NEYFDLSFITTR). Residues 1089 to 1109 (VFLWKVCVITLVSCLPLYIIK) form a helical membrane-spanning segment. At 1110-1125 (YLKRKFSPPSYSKLSS) the chain is on the cytoplasmic side.

This sequence belongs to the cation transport ATPase (P-type) (TC 3.A.3) family. Type IV subfamily. It depends on Mg(2+) as a cofactor.

It is found in the golgi apparatus. The protein localises to the trans-Golgi network membrane. It catalyses the reaction ATP + H2O + phospholipidSide 1 = ADP + phosphate + phospholipidSide 2.. This chain is Probable phospholipid-transporting ATPase IIB (atp9b), found in Danio rerio (Zebrafish).